A 335-amino-acid chain; its full sequence is MELTLEGDVVRAGYEARERFYDSRGYGKVRNGDIDLAPVEAAHLLYRGDIESIDGMDFRGFLGSAAVSEVDFAVYKDLRDRGFYLTPAREGWVDDAAGADFVVYPRGKGPWDNEVAYRVRIIGERDTAVATDLGGCVLAVVDEESEVTYLDTDRREVSGTSDAAVPATAGELLGERVVCWEPPAELYEQAFYGQQLGDDGAVQLSLVEAAYLTQEGMLTVEGGADAVVERGREVEGDRFDRRLAVYTALRASGVAPKTGFKFGADFRTYADVESAENLGHSELLVRVLPADHRFEPRDLALDVRLAHGVRKTMVFALTTDGGDEIEWVAVERLTP.

Catalysis depends on residues Y269, H280, and K311.

The protein belongs to the tRNA-intron endonuclease family. Archaeal long subfamily. As to quaternary structure, homodimer.

It carries out the reaction pretRNA = a 3'-half-tRNA molecule with a 5'-OH end + a 5'-half-tRNA molecule with a 2',3'-cyclic phosphate end + an intron with a 2',3'-cyclic phosphate and a 5'-hydroxyl terminus.. In terms of biological role, endonuclease that removes tRNA introns. Cleaves pre-tRNA at the 5'- and 3'-splice sites to release the intron. The products are an intron and two tRNA half-molecules bearing 2',3' cyclic phosphate and 5'-OH termini. Recognizes a pseudosymmetric substrate in which 2 bulged loops of 3 bases are separated by a stem of 4 bp. This chain is tRNA-splicing endonuclease, found in Haloarcula marismortui (strain ATCC 43049 / DSM 3752 / JCM 8966 / VKM B-1809) (Halobacterium marismortui).